The sequence spans 321 residues: Cytochrome c biogenesis protein CcsA (321 aa).

The next 8 membrane-spanning stretches (helical) occupy residues 17–37 (VVSIVIIIHFLTLLVNEFVGL), 48–68 (TFFCLTGLLITRWIYSGHLPI), 71–91 (LYESLIFLSWIFSIIHMVPYF), 98–118 (LSTITAPSTFFTQGFATWGLL), 143–163 (MVSGYAALLCGSLLSAALLVI), 225–245 (ILSIGFLFLTIGILSGAVWAN), 259–273 (TWAFITWTIFAIYFH), and 286–306 (AIVASIGFLIIWICYFGVNLL).

It belongs to the CcmF/CycK/Ccl1/NrfE/CcsA family. As to quaternary structure, may interact with Ccs1.

Its subcellular location is the plastid. The protein localises to the chloroplast thylakoid membrane. Required during biogenesis of c-type cytochromes (cytochrome c6 and cytochrome f) at the step of heme attachment. This chain is Cytochrome c biogenesis protein CcsA, found in Populus alba (White poplar).